We begin with the raw amino-acid sequence, 334 residues long: D-alanine--D-alanine ligase (334 aa).

One can recognise an ATP-grasp domain in the interval lysine 114–alanine 314. Leucine 140–threonine 195 lines the ATP pocket. Positions 267, 281, and 283 each coordinate Mg(2+).

The protein belongs to the D-alanine--D-alanine ligase family. Mg(2+) serves as cofactor. Requires Mn(2+) as cofactor.

It localises to the cytoplasm. The enzyme catalyses 2 D-alanine + ATP = D-alanyl-D-alanine + ADP + phosphate + H(+). The protein operates within cell wall biogenesis; peptidoglycan biosynthesis. Functionally, cell wall formation. This chain is D-alanine--D-alanine ligase, found in Paracidovorax citrulli (strain AAC00-1) (Acidovorax citrulli).